Reading from the N-terminus, the 277-residue chain is MAIKKYKPTTNGRRHMTSSDFAEITTSTPEKSLLRPLKKKAGRNNQGKLTVRHHGGGHKRQYRVIDFKRNKDGIPGRVATIEYDPNRSANIALINYADGEKRYIIAAKGLEVGQTIYSGAEADIKVGNALELKDIPVGTVIHNIEMKPGKGGQLVRSAGTSAQVLGKEGKYVLIRLNSGEVRMILATCRATIGQVGNEQHELINIGKAGRSRWMGKRPTVRGSVMNPNDHPHGGGEGKAPIGRKSPMSPWGKPTLGYKTRKKNNNSDKFIVRRRKKK.

Disordered regions lie at residues 24-55 and 221-277; these read ITTS…RHHG and RGSV…RKKK.

It belongs to the universal ribosomal protein uL2 family. In terms of assembly, part of the 50S ribosomal subunit. Forms a bridge to the 30S subunit in the 70S ribosome.

Functionally, one of the primary rRNA binding proteins. Required for association of the 30S and 50S subunits to form the 70S ribosome, for tRNA binding and peptide bond formation. It has been suggested to have peptidyltransferase activity; this is somewhat controversial. Makes several contacts with the 16S rRNA in the 70S ribosome. This is Large ribosomal subunit protein uL2 from Listeria innocua serovar 6a (strain ATCC BAA-680 / CLIP 11262).